The sequence spans 362 residues: Phospho-N-acetylmuramoyl-pentapeptide-transferase (362 aa).

10 helical membrane passes run 27 to 47 (VMAA…VIRW), 73 to 93 (TMGG…WGDL), 97 to 117 (YVWV…VDDW), 132 to 152 (WKYL…GLTA), 160 to 180 (LIVP…FVAL), 200 to 220 (GLAI…AYVA), 237 to 257 (AGEL…FLWF), 264 to 284 (VFMG…VAVV), 289 to 309 (IVLF…MVQV), and 339 to 359 (QVVV…LSTL).

The protein belongs to the glycosyltransferase 4 family. MraY subfamily. Mg(2+) serves as cofactor.

It localises to the cell inner membrane. It carries out the reaction UDP-N-acetyl-alpha-D-muramoyl-L-alanyl-gamma-D-glutamyl-meso-2,6-diaminopimeloyl-D-alanyl-D-alanine + di-trans,octa-cis-undecaprenyl phosphate = di-trans,octa-cis-undecaprenyl diphospho-N-acetyl-alpha-D-muramoyl-L-alanyl-D-glutamyl-meso-2,6-diaminopimeloyl-D-alanyl-D-alanine + UMP. Its pathway is cell wall biogenesis; peptidoglycan biosynthesis. In terms of biological role, catalyzes the initial step of the lipid cycle reactions in the biosynthesis of the cell wall peptidoglycan: transfers peptidoglycan precursor phospho-MurNAc-pentapeptide from UDP-MurNAc-pentapeptide onto the lipid carrier undecaprenyl phosphate, yielding undecaprenyl-pyrophosphoryl-MurNAc-pentapeptide, known as lipid I. The polypeptide is Phospho-N-acetylmuramoyl-pentapeptide-transferase (Aromatoleum aromaticum (strain DSM 19018 / LMG 30748 / EbN1) (Azoarcus sp. (strain EbN1))).